The primary structure comprises 344 residues: Large ribosomal subunit protein uL3 (344 aa).

It belongs to the universal ribosomal protein uL3 family. In terms of assembly, part of the 50S ribosomal subunit. Forms a cluster with proteins L14 and L24e.

In terms of biological role, one of the primary rRNA binding proteins, it binds directly near the 3'-end of the 23S rRNA, where it nucleates assembly of the 50S subunit. The polypeptide is Large ribosomal subunit protein uL3 (Aeropyrum pernix (strain ATCC 700893 / DSM 11879 / JCM 9820 / NBRC 100138 / K1)).